The sequence spans 285 residues: Urease accessory protein UreD (285 aa).

This sequence belongs to the UreD family. In terms of assembly, ureD, UreF and UreG form a complex that acts as a GTP-hydrolysis-dependent molecular chaperone, activating the urease apoprotein by helping to assemble the nickel containing metallocenter of UreC. The UreE protein probably delivers the nickel.

It is found in the cytoplasm. Functionally, required for maturation of urease via the functional incorporation of the urease nickel metallocenter. The sequence is that of Urease accessory protein UreD from Picosynechococcus sp. (strain ATCC 27264 / PCC 7002 / PR-6) (Agmenellum quadruplicatum).